The primary structure comprises 234 residues: Zinc finger BED domain-containing protein 3 (234 aa).

Positions 19–42 (AAARGGQCPGLGPAPTPTPPGRLG) are disordered. Residues 43–104 (APYSEAWGYF…SAHRRELESS (62 aa)) form a BED-type zinc finger. Zn(2+)-binding residues include C69, C72, H92, and H97. Disordered stretches follow at residues 94–126 (RSAH…AAPE) and 202–225 (REGA…GDRD). The span at 111–122 (PAAPCPPPPGPA) shows a compositional bias: pro residues. Residues 216–225 (LKDDPEGDRD) are compositionally biased toward basic and acidic residues.

In terms of assembly, associates with the subcortical maternal complex (SCMC) composed of at least NLRP5, KHDC3L, OOEP, and TLE6 via interaction with NLRP5 and TLE6. Interacts with AXIN1; the interaction is direct, enhanced by protein kinase GSK3B and casein kinase CSNK1E activities and decreases GSK3B-induced beta-catenin serine and threonine phosphorylations. Secreted in blood plasma, and expressed in skeletal muscle and adipose tissue (at protein level).

It is found in the cytoplasm. The protein localises to the membrane. The protein resides in the secreted. Its function is as follows. Acts as a positive regulator in the activation of the canonical Wnt/beta-catenin signaling pathway by stabilizing cytoplasmic beta-catenin. Involved in transcription activation of Wnt target gene expression. Plays a role in symmetric division of blastomeres in the early stages of embryogenesis via regulation of mitotic spindle central positioning and organization of the F-actin filament network. Plays a role in regulating the distribution of cellular organelles, via modulation of cytoskeletal dynamics and cytoplasmic lattice formation. The protein is Zinc finger BED domain-containing protein 3 (ZBED3) of Homo sapiens (Human).